Here is a 532-residue protein sequence, read N- to C-terminus: Light-independent protochlorophyllide reductase subunit B (532 aa).

D36 contributes to the [4Fe-4S] cluster binding site. The active-site Proton donor is the D318. A substrate-binding site is contributed by 453–454 (GM).

The protein belongs to the ChlB/BchB/BchZ family. As to quaternary structure, protochlorophyllide reductase is composed of three subunits; ChlL, ChlN and ChlB. Forms a heterotetramer of two ChlB and two ChlN subunits. [4Fe-4S] cluster serves as cofactor.

It is found in the plastid. The protein localises to the chloroplast. The catalysed reaction is chlorophyllide a + oxidized 2[4Fe-4S]-[ferredoxin] + 2 ADP + 2 phosphate = protochlorophyllide a + reduced 2[4Fe-4S]-[ferredoxin] + 2 ATP + 2 H2O. It participates in porphyrin-containing compound metabolism; chlorophyll biosynthesis (light-independent). In terms of biological role, component of the dark-operative protochlorophyllide reductase (DPOR) that uses Mg-ATP and reduced ferredoxin to reduce ring D of protochlorophyllide (Pchlide) to form chlorophyllide a (Chlide). This reaction is light-independent. The NB-protein (ChlN-ChlB) is the catalytic component of the complex. The chain is Light-independent protochlorophyllide reductase subunit B from Tetradesmus obliquus (Green alga).